Here is a 286-residue protein sequence, read N- to C-terminus: Pyridoxal kinase PdxY (286 aa).

Substrate contacts are provided by residues Ser-9 and 44-45; that span reads TQ. Residues Asp-111, Glu-148, and Lys-181 each coordinate ATP. Substrate is bound at residue Asp-222.

It belongs to the pyridoxine kinase family. PdxY subfamily. In terms of assembly, homodimer. Requires Mg(2+) as cofactor.

The enzyme catalyses pyridoxal + ATP = pyridoxal 5'-phosphate + ADP + H(+). It participates in cofactor metabolism; pyridoxal 5'-phosphate salvage; pyridoxal 5'-phosphate from pyridoxal: step 1/1. In terms of biological role, pyridoxal kinase involved in the salvage pathway of pyridoxal 5'-phosphate (PLP). Catalyzes the phosphorylation of pyridoxal to PLP. This Pasteurella multocida (strain Pm70) protein is Pyridoxal kinase PdxY.